We begin with the raw amino-acid sequence, 305 residues long: Translation initiation factor eIF2B subunit alpha (305 aa).

N6-acetyllysine is present on K35.

The protein belongs to the eIF-2B alpha/beta/delta subunits family. In terms of assembly, component of the translation initiation factor 2B (eIF2B) complex which is a heterodecamer of two sets of five different subunits: alpha, beta, gamma, delta and epsilon. Subunits alpha, beta and delta comprise a regulatory subcomplex and subunits epsilon and gamma comprise a catalytic subcomplex. Within the complex, the hexameric regulatory complex resides at the center, with the two heterodimeric catalytic subcomplexes bound on opposite sides.

The protein localises to the cytoplasm. Its subcellular location is the cytosol. Its activity is regulated as follows. Activated by the chemical integrated stress response (ISR) inhibitor ISRIB which stimulates guanine nucleotide exchange factor activity for both phosphorylated and unphosphorylated eIF2. In terms of biological role, acts as a component of the translation initiation factor 2B (eIF2B) complex, which catalyzes the exchange of GDP for GTP on eukaryotic initiation factor 2 (eIF2) gamma subunit. Its guanine nucleotide exchange factor activity is repressed when bound to eIF2 complex phosphorylated on the alpha subunit, thereby limiting the amount of methionyl-initiator methionine tRNA available to the ribosome and consequently global translation is repressed. This chain is Translation initiation factor eIF2B subunit alpha (Eif2b1), found in Mus musculus (Mouse).